The chain runs to 345 residues: Beta-ketoacyl-[acyl-carrier-protein] synthase III (345 aa).

Active-site residues include C114 and H272. Positions 273-277 (QANQR) are ACP-binding. N302 is an active-site residue.

The protein belongs to the thiolase-like superfamily. FabH family. As to quaternary structure, homodimer.

It is found in the cytoplasm. The enzyme catalyses malonyl-[ACP] + acetyl-CoA + H(+) = 3-oxobutanoyl-[ACP] + CO2 + CoA. Its pathway is lipid metabolism; fatty acid biosynthesis. Functionally, catalyzes the condensation reaction of fatty acid synthesis by the addition to an acyl acceptor of two carbons from malonyl-ACP. Catalyzes the first condensation reaction which initiates fatty acid synthesis and may therefore play a role in governing the total rate of fatty acid production. Possesses both acetoacetyl-ACP synthase and acetyl transacylase activities. Its substrate specificity determines the biosynthesis of branched-chain and/or straight-chain of fatty acids. The protein is Beta-ketoacyl-[acyl-carrier-protein] synthase III of Rhodopirellula baltica (strain DSM 10527 / NCIMB 13988 / SH1).